The chain runs to 400 residues: NADH-quinone oxidoreductase subunit D (400 aa).

The protein belongs to the complex I 49 kDa subunit family. In terms of assembly, NDH-1 is composed of 14 different subunits. Subunits NuoB, C, D, E, F, and G constitute the peripheral sector of the complex.

Its subcellular location is the cell inner membrane. It catalyses the reaction a quinone + NADH + 5 H(+)(in) = a quinol + NAD(+) + 4 H(+)(out). NDH-1 shuttles electrons from NADH, via FMN and iron-sulfur (Fe-S) centers, to quinones in the respiratory chain. The immediate electron acceptor for the enzyme in this species is believed to be a menaquinone. Couples the redox reaction to proton translocation (for every two electrons transferred, four hydrogen ions are translocated across the cytoplasmic membrane), and thus conserves the redox energy in a proton gradient. In Chlorobaculum tepidum (strain ATCC 49652 / DSM 12025 / NBRC 103806 / TLS) (Chlorobium tepidum), this protein is NADH-quinone oxidoreductase subunit D.